The chain runs to 204 residues: Large ribosomal subunit protein uL4 (204 aa).

A disordered region spans residues 44-76 (RAGTHRTKGMGEISGTTKKPYRQKGTGSARQGS).

The protein belongs to the universal ribosomal protein uL4 family. As to quaternary structure, part of the 50S ribosomal subunit.

One of the primary rRNA binding proteins, this protein initially binds near the 5'-end of the 23S rRNA. It is important during the early stages of 50S assembly. It makes multiple contacts with different domains of the 23S rRNA in the assembled 50S subunit and ribosome. Its function is as follows. Forms part of the polypeptide exit tunnel. The polypeptide is Large ribosomal subunit protein uL4 (Gluconobacter oxydans (strain 621H) (Gluconobacter suboxydans)).